The primary structure comprises 620 residues: Endoglucanase 10 (620 aa).

Residues 1 to 26 form a disordered region; the sequence is MFGRDPWGGPLEISNADSATDDDRSR. A helical; Signal-anchor for type II membrane protein membrane pass occupies residues 72 to 92; that stretch reads IFMWTVGTILGVGLFIGFVMM. The active-site Nucleophile is the Asp-165. N-linked (GlcNAc...) asparagine glycans are attached at residues Asn-216, Asn-314, Asn-323, Asn-344, Asn-408, and Asn-425. Catalysis depends on residues His-513 and Asp-561. N-linked (GlcNAc...) asparagine glycosylation is present at Asn-567. Residue Glu-570 is part of the active site.

Belongs to the glycosyl hydrolase 9 (cellulase E) family. In terms of tissue distribution, ubiquitous.

The protein localises to the membrane. The enzyme catalyses Endohydrolysis of (1-&gt;4)-beta-D-glucosidic linkages in cellulose, lichenin and cereal beta-D-glucans.. In Oryza sativa subsp. japonica (Rice), this protein is Endoglucanase 10 (GLU2).